The chain runs to 619 residues: Probable pectinesterase/pectinesterase inhibitor 25 (619 aa).

A signal peptide spans 1–23; that stretch reads MKMQTLNFTSSLLFLSFIFLSCA. The disordered stretch occupies residues 31–84; that stretch reads SPSQPHSEPPSQLPFEPPVESPFFPPSQPPIFVPPSQPPSLPPSQSQSPSLACK. Residues 37-72 are compositionally biased toward pro residues; that stretch reads SEPPSQLPFEPPVESPFFPPSQPPIFVPPSQPPSLP. The tract at residues 73-231 is pectinesterase inhibitor 25; the sequence is PSQSQSPSLA…TRLYSISLGL (159 aa). Residues Asn-220, Asn-255, Asn-312, Asn-325, and Asn-364 are each glycosylated (N-linked (GlcNAc...) asparagine). The tract at residues 302-601 is pectinesterase 25; that stretch reads AVIVGPFKSD…FTVYNFTMGD (300 aa). A substrate-binding site is contributed by Thr-380. Asn-382 is a glycosylation site (N-linked (GlcNAc...) asparagine). Gln-410 provides a ligand contact to substrate. Catalysis depends on Asp-433, which acts as the Proton donor; for pectinesterase activity. A disulfide bond links Cys-447 and Cys-467. Asp-454 serves as the catalytic Nucleophile; for pectinesterase activity. A glycan (N-linked (GlcNAc...) asparagine) is linked at Asn-500. Substrate contacts are provided by Arg-522 and Trp-524. N-linked (GlcNAc...) asparagine glycosylation is found at Asn-550, Asn-591, and Asn-596.

In the N-terminal section; belongs to the PMEI family. This sequence in the C-terminal section; belongs to the pectinesterase family. Expressed in siliques.

It is found in the secreted. It localises to the cell wall. It carries out the reaction [(1-&gt;4)-alpha-D-galacturonosyl methyl ester](n) + n H2O = [(1-&gt;4)-alpha-D-galacturonosyl](n) + n methanol + n H(+). It functions in the pathway glycan metabolism; pectin degradation; 2-dehydro-3-deoxy-D-gluconate from pectin: step 1/5. Its function is as follows. Acts in the modification of cell walls via demethylesterification of cell wall pectin. The sequence is that of Probable pectinesterase/pectinesterase inhibitor 25 (PME25) from Arabidopsis thaliana (Mouse-ear cress).